The chain runs to 133 residues: Fatty acid-binding protein (133 aa).

The protein belongs to the calycin superfamily. Fatty-acid binding protein (FABP) family.

The polypeptide is Fatty acid-binding protein (Clonorchis sinensis (Chinese liver fluke)).